The primary structure comprises 201 residues: Transcriptional regulator GfcR (201 aa).

This sequence belongs to the purine/pyrimidine phosphoribosyltransferase family. GfcR subfamily.

In Methanobrevibacter smithii (strain ATCC 35061 / DSM 861 / OCM 144 / PS), this protein is Transcriptional regulator GfcR.